The following is a 190-amino-acid chain: DNA dC-&gt;dU-editing enzyme APOBEC-3C (190 aa).

The 110-residue stretch at aspartate 29–leucine 138 folds into the CMP/dCMP-type deaminase domain. Residues histidine 66, cysteine 97, and cysteine 100 each coordinate Zn(2+).

The protein belongs to the cytidine and deoxycytidylate deaminase family. As to quaternary structure, homodimer. Interacts with TRIB3. The cofactor is Zn(2+).

The protein resides in the nucleus. Its subcellular location is the cytoplasm. It carries out the reaction a 2'-deoxycytidine in single-stranded DNA + H2O + H(+) = a 2'-deoxyuridine in single-stranded DNA + NH4(+). Functionally, DNA deaminase (cytidine deaminase) which acts as an inhibitor of retrovirus replication and retrotransposon mobility via deaminase-dependent and -independent mechanisms. May also play a role in the epigenetic regulation of gene expression through the process of active DNA demethylation. The sequence is that of DNA dC-&gt;dU-editing enzyme APOBEC-3C (APOBEC3C) from Gorilla gorilla gorilla (Western lowland gorilla).